Reading from the N-terminus, the 635-residue chain is Threonine--tRNA ligase (635 aa).

The region spanning 1–61 is the TGS domain; sequence MIVITLPDGS…EGDARLAIVT (61 aa). Positions 242 to 533 are catalytic; sequence DHRKLGRELD…LIEQHAGALP (292 aa). Positions 333, 384, and 510 each coordinate Zn(2+).

Belongs to the class-II aminoacyl-tRNA synthetase family. As to quaternary structure, homodimer. It depends on Zn(2+) as a cofactor.

It is found in the cytoplasm. It carries out the reaction tRNA(Thr) + L-threonine + ATP = L-threonyl-tRNA(Thr) + AMP + diphosphate + H(+). Its function is as follows. Catalyzes the attachment of threonine to tRNA(Thr) in a two-step reaction: L-threonine is first activated by ATP to form Thr-AMP and then transferred to the acceptor end of tRNA(Thr). Also edits incorrectly charged L-seryl-tRNA(Thr). The sequence is that of Threonine--tRNA ligase from Methylibium petroleiphilum (strain ATCC BAA-1232 / LMG 22953 / PM1).